Reading from the N-terminus, the 489-residue chain is Homoserine O-acetyltransferase (489 aa).

The region spanning 69-438 (LLLCHALSGS…AEGHDGFLLE (370 aa)) is the AB hydrolase-1 domain. Catalysis depends on serine 163, which acts as the Nucleophile. A disordered region spans residues 255-329 (ASRHPYPDRL…QTTDSSSLNQ (75 aa)). Positions 280 to 290 (EGNRNRRERPC) are enriched in basic and acidic residues. A compositionally biased stretch (low complexity) spans 299–329 (SESALNSPASSVSSLPSLGASQTTDSSSLNQ). Catalysis depends on residues aspartate 403 and histidine 432.

It belongs to the AB hydrolase superfamily. MetX family.

The protein localises to the cytoplasm. It catalyses the reaction L-homoserine + acetyl-CoA = O-acetyl-L-homoserine + CoA. It functions in the pathway amino-acid biosynthesis; L-methionine biosynthesis via de novo pathway; O-acetyl-L-homoserine from L-homoserine: step 1/1. In terms of biological role, commits homoserine to the methionine biosynthesis pathway by catalyzing its O-acetylation. In Schizosaccharomyces pombe (strain 972 / ATCC 24843) (Fission yeast), this protein is Homoserine O-acetyltransferase (met6).